The chain runs to 1185 residues: 205 kDa microtubule-associated protein (1185 aa).

Over residues 146–159 (EPNQLPEQLQQQQQ) the composition is skewed to low complexity. The interval 146-196 (EPNQLPEQLQQQQQIESQGVHEDPRQEDEDEHSSVATTYGTSSLSENNSSP) is disordered. Positions 179–196 (SVATTYGTSSLSENNSSP) are enriched in polar residues. Phosphoserine occurs at positions 354 and 448. Tyr-450 is subject to Phosphotyrosine. Phosphoserine is present on residues Ser-709, Ser-710, and Ser-712. Position 721 is a phosphothreonine (Thr-721). Position 728 is a phosphoserine (Ser-728). The tract at residues 745 to 977 (TAADGQSISQ…ASTKVRPAAT (233 aa)) is microtubule-binding. Positions 856-866 (SIATKTSTTSS) are enriched in low complexity. 2 disordered regions span residues 856–1035 (SIAT…TSTA) and 1054–1114 (SASL…SSPA). Composition is skewed to polar residues over residues 867 to 881 (LTGNPRKSLSSNVGS) and 908 to 936 (TITNKPTASGTASDNVTRTTLRPLVSTNA). The residue at position 874 (Ser-874) is a Phosphoserine. Over residues 940–952 (ATSGTGSVASSTA) the composition is skewed to low complexity. Residues 989–999 (PRSTISSTTTV) show a composition bias toward polar residues. Residues 1003 to 1015 (PSTSTPSFSTRSP) show a composition bias toward low complexity. Polar residues-rich tracts occupy residues 1016–1026 (NKQQSNGLGKN) and 1054–1066 (SASLTYNNGSTSR). A phosphoserine mark is found at Ser-1075 and Ser-1086. Residues 1100–1111 (LTPQSKDGTAKS) show a composition bias toward polar residues. Residue Ser-1121 is modified to Phosphoserine.

It is found in the cytoplasm. It localises to the cytoskeleton. Its subcellular location is the spindle. Functionally, may play an important role in the regulation of microtubule assembly and interaction. This Drosophila melanogaster (Fruit fly) protein is 205 kDa microtubule-associated protein (Map205).